The primary structure comprises 553 residues: MGSRSSTRIPVPLMLIIRTALTLSCIRLTSSLDGRPLAAAGIVVTGDKAVNIYTSSQTGSIIVKLLPNMPKDKEVCAKAPLEAYNRTLTTLLTPLGDSIRRIQESVTTSGGRRQRRFIGAIIGSVALGVATAAQITAASALIQANQNAANILRLKESIAATNEAVHEVTDGLSQLAVAVGKMQQFVNDQFNNTAQELDCIKIAQQVGVELNLYLTELTTVFGPQITSPALTQLTIQALYNLAGGNMDYLLTKLGVGNNQLSSLIGSGLITGNPILYDSQTQILGIQVTLPSVGNLNNMRATYLETLSVSTTKGFASALVPKVVTQVGSVIEELDTSYCIGTDLDLYCTRIVTFPMSPGIYSCLSGNTSACMYSKTEGALTTPYMALKGSVIANCKLTTCRCADPPGIISQNYGEAVSLIDRHSCNVLSLDGITLRLSGEFDATYQKNISILDSQVIVTGNLDISTELGNVNNSISNALNKLEESNSKLDKVNVKLTSTSALITYIVLTVISLVFGVLSLVLACYLMYKQKAQQKTLLWLGNNTLDQMRATTKI.

The signal sequence occupies residues Met-1 to Ser-31. Residues Leu-32–Ala-500 are Extracellular-facing. 3 cysteine pairs are disulfide-bonded: Cys-76/Cys-199, Cys-338/Cys-347, and Cys-362/Cys-370. N-linked (GlcNAc...) asparagine; by host glycosylation is present at Asn-85. Positions Phe-117–Leu-141 are fusion peptide. Residues Ile-142 to Asp-170 are a coiled coil. An N-linked (GlcNAc...) asparagine; by host glycan is attached at Asn-191. N-linked (GlcNAc...) asparagine; by host glycosylation is found at Asn-366, Asn-447, and Asn-471. Residues Glu-466–Val-491 adopt a coiled-coil conformation. The helical transmembrane segment at Leu-501–Leu-521 threads the bilayer. Over Ala-522–Ile-553 the chain is Cytoplasmic. A lipid anchor (S-palmitoyl cysteine; by host) is attached at Cys-523.

Belongs to the paramyxoviruses fusion glycoprotein family. As to quaternary structure, homotrimer of disulfide-linked F1-F2. In terms of processing, the inactive precursor F0 is glycosylated and proteolytically cleaved into F1 and F2 to be functionally active. The cleavage is mediated by cellular proteases during the transport and maturation of the polypeptide.

It is found in the virion membrane. It localises to the host cell membrane. In terms of biological role, class I viral fusion protein. Under the current model, the protein has at least 3 conformational states: pre-fusion native state, pre-hairpin intermediate state, and post-fusion hairpin state. During viral and plasma cell membrane fusion, the heptad repeat (HR) regions assume a trimer-of-hairpins structure, positioning the fusion peptide in close proximity to the C-terminal region of the ectodomain. The formation of this structure appears to drive apposition and subsequent fusion of viral and plasma cell membranes. Directs fusion of viral and cellular membranes leading to delivery of the nucleocapsid into the cytoplasm. This fusion is pH independent and occurs directly at the outer cell membrane. The trimer of F1-F2 (F protein) probably interacts with HN at the virion surface. Upon HN binding to its cellular receptor, the hydrophobic fusion peptide is unmasked and interacts with the cellular membrane, inducing the fusion between cell and virion membranes. Later in infection, F proteins expressed at the plasma membrane of infected cells could mediate fusion with adjacent cells to form syncytia, a cytopathic effect that could lead to tissue necrosis. This Gallus gallus (Chicken) protein is Fusion glycoprotein F0 (F).